Reading from the N-terminus, the 219-residue chain is VQ motif-containing protein 19 (219 aa).

The short motif at 47-56 (FKQVVQMLTG) is the VQ element. Positions 52 to 94 (QMLTGSSSPRSPDSPRPPTTPSGKGNFVIPPIKTAQPKKHSGN) are disordered. Residues S59, S65, S127, S131, S139, S141, and S152 each carry the phosphoserine modification. T155 carries the post-translational modification Phosphothreonine. Disordered stretches follow at residues 156-177 (PLKQGTNGNEGDPFDKMSPLSE) and 190-219 (HRSPISTPRDSEPQLLPLFPVTSPRLSPEM). Residues S192 and S195 each carry the phosphoserine modification. Residues T196 and T211 each carry the phosphothreonine modification. 2 positions are modified to phosphoserine: S212 and S216.

Post-translationally, phosphorylated on serine and threonine residues by MPK6.

The protein localises to the nucleus. In terms of biological role, may modulate WRKY transcription factor activities. The chain is VQ motif-containing protein 19 from Arabidopsis thaliana (Mouse-ear cress).